Here is a 178-residue protein sequence, read N- to C-terminus: dCTP deaminase, dUMP-forming (178 aa).

DCTP-binding positions include 96 to 101 (RSSLGR), D113, 121 to 123 (TLE), Q142, Y156, and Q163. The active-site Proton donor/acceptor is E123.

This sequence belongs to the dCTP deaminase family. In terms of assembly, homotrimer.

The catalysed reaction is dCTP + 2 H2O = dUMP + NH4(+) + diphosphate. Its pathway is pyrimidine metabolism; dUMP biosynthesis; dUMP from dCTP: step 1/1. In terms of biological role, bifunctional enzyme that catalyzes both the deamination of dCTP to dUTP and the hydrolysis of dUTP to dUMP without releasing the toxic dUTP intermediate. The sequence is that of dCTP deaminase, dUMP-forming from Acetivibrio thermocellus (strain ATCC 27405 / DSM 1237 / JCM 9322 / NBRC 103400 / NCIMB 10682 / NRRL B-4536 / VPI 7372) (Clostridium thermocellum).